The sequence spans 30 residues: Conotoxin CcTx (30 aa).

Pro2 is subject to 4-hydroxyproline. Ser7 is a glycosylation site (O-linked (HexNAc...) serine). Disulfide bonds link Cys12/Cys21, Cys13/Cys26, and Cys24/Cys30. 4-hydroxyproline occurs at positions 17 and 22.

O-glycosylated at Ser-7 by a core type 9 glycan, containing both D- and L-galactose units (alpha-L-Galp-(1-&gt;4)-alpha-D- GlcpNAc-(1-&gt;6)-[alpha-L-Galp-(1-&gt;2)-bets-D-Galp-(1-&gt;3)-]alpha-D-GalpNAc-(1-&gt;O)). In terms of tissue distribution, expressed by the venom duct.

The protein localises to the secreted. Functionally, may specifically activate neuronal voltage-gated sodium channels (Nav) at the resting membrane potential. Causes a marked contraction and extension of the caudal and dorsal fins in fish and noticeable spontaneous contractions of isolated frog neuromuscular preparations. The chain is Conotoxin CcTx from Conus consors (Singed cone).